Consider the following 272-residue polypeptide: Adenylate kinase (272 aa).

55–60 (GAGKGT) contacts ATP. The NMP stretch occupies residues 75-104 (ATGDMLRSQVAKKTPLGKEAKKIMDQGGLV). Residues Thr-76, Arg-81, 102–104 (GLV), 131–134 (GFPR), and Gln-138 each bind AMP. The segment at 172 to 209 (GRLVHPASGRSYHKIFNPPKQDMKDDITGEPLIQRSDD) is LID. ATP-binding positions include Arg-173 and 182-183 (SY). 2 residues coordinate AMP: Arg-206 and Arg-217. Gln-245 provides a ligand contact to ATP.

The protein belongs to the adenylate kinase family. AK2 subfamily. As to quaternary structure, monomer.

The protein resides in the cytoplasm. The protein localises to the cytosol. Its subcellular location is the mitochondrion intermembrane space. It catalyses the reaction AMP + ATP = 2 ADP. Functionally, catalyzes the reversible transfer of the terminal phosphate group between ATP and AMP. Plays an important role in cellular energy homeostasis and in adenine nucleotide metabolism. Adenylate kinase activity is critical for regulation of the phosphate utilization and the AMP de novo biosynthesis pathways. This chain is Adenylate kinase (adk1), found in Talaromyces marneffei (Penicillium marneffei).